The primary structure comprises 291 residues: 4-diphosphocytidyl-2-C-methyl-D-erythritol kinase (291 aa).

Lysine 11 is an active-site residue. 95 to 105 (PVAAGMAGGSS) is an ATP binding site. Aspartate 137 is a catalytic residue.

Belongs to the GHMP kinase family. IspE subfamily.

It catalyses the reaction 4-CDP-2-C-methyl-D-erythritol + ATP = 4-CDP-2-C-methyl-D-erythritol 2-phosphate + ADP + H(+). It participates in isoprenoid biosynthesis; isopentenyl diphosphate biosynthesis via DXP pathway; isopentenyl diphosphate from 1-deoxy-D-xylulose 5-phosphate: step 3/6. In terms of biological role, catalyzes the phosphorylation of the position 2 hydroxy group of 4-diphosphocytidyl-2C-methyl-D-erythritol. This chain is 4-diphosphocytidyl-2-C-methyl-D-erythritol kinase, found in Lachnoclostridium phytofermentans (strain ATCC 700394 / DSM 18823 / ISDg) (Clostridium phytofermentans).